The primary structure comprises 129 residues: HTH-type transcriptional regulator HmrR (129 aa).

Residues 1–68 form the HTH merR-type domain; the sequence is MNIGEASERS…VEECRQLLAL (68 aa). A DNA-binding region (H-T-H motif) is located at residues 4–23; it reads GEASERSGLPSKTIRYYEDI.

In terms of assembly, homodimer.

The protein localises to the cytoplasm. Its function is as follows. Regulates the transcription of actP. It detects cytoplasmic copper stress and activates transcription in response to increasing copper concentrations. In the absence of copper, it negatively regulates the transcription of actP. This Rhizobium leguminosarum bv. viciae protein is HTH-type transcriptional regulator HmrR (hmrR).